Here is a 368-residue protein sequence, read N- to C-terminus: DNA replication and repair protein RecF (368 aa).

Position 30 to 37 (30 to 37 (GKNGTGKT)) interacts with ATP.

This sequence belongs to the RecF family.

It localises to the cytoplasm. Functionally, the RecF protein is involved in DNA metabolism; it is required for DNA replication and normal SOS inducibility. RecF binds preferentially to single-stranded, linear DNA. It also seems to bind ATP. In Chloroherpeton thalassium (strain ATCC 35110 / GB-78), this protein is DNA replication and repair protein RecF.